The sequence spans 180 residues: MGLGRRAMVYLGLAEEDEDYLDDDYDDGRAVGRDDRRAMHEPVPMDRTVRRIDAREEPVAMPRRPPVEPLRPAGPVPMRRVAAVEESHPYRITTLQPRSYNEARQIGEEFRDGTPVIMNLTDMDDADAKRLVDFAAGLIFGLRGDLEKVTNKVFLLSPHNVEVTETDKRRIREGGFYNQS.

The disordered stretch occupies residues 21 to 40; sequence LDDDYDDGRAVGRDDRRAMH. A compositionally biased stretch (basic and acidic residues) spans 27 to 40; the sequence is DGRAVGRDDRRAMH.

It belongs to the SepF family. As to quaternary structure, homodimer. Interacts with FtsZ.

It localises to the cytoplasm. Functionally, cell division protein that is part of the divisome complex and is recruited early to the Z-ring. Probably stimulates Z-ring formation, perhaps through the cross-linking of FtsZ protofilaments. Its function overlaps with FtsA. The protein is Cell division protein SepF of Frankia casuarinae (strain DSM 45818 / CECT 9043 / HFP020203 / CcI3).